Here is a 471-residue protein sequence, read N- to C-terminus: Microtubule-associated tyrosine carboxypeptidase 1 (471 aa).

Disordered stretches follow at residues 1-40 (MVLDSGAQAYDQAPPSPPTSPPSLRHRLKPSDRDGPPLYP) and 76-116 (HMRR…LRPA). His-280 lines the Zn(2+) pocket. Glu-281 serves as the catalytic Nucleophile. 2 residues coordinate Zn(2+): His-285 and Glu-316.

Belongs to the peptidase MATCAP family. Zn(2+) serves as cofactor.

Its subcellular location is the cytoplasm. It localises to the cytoskeleton. The catalysed reaction is C-terminal L-alpha-aminoacyl-L-glutamyl-L-glutamyl-L-tyrosyl-[tubulin] + H2O = C-terminal L-alpha-aminoacyl-L-glutamyl-L-glutamyl-[tubulin] + L-tyrosine. It carries out the reaction C-terminal L-alpha-aminoacyl-L-glutamyl-L-glutamyl-L-phenylalanyl-[tubulin] + H2O = C-terminal L-alpha-aminoacyl-L-glutamyl-L-glutamyl-[tubulin] + L-phenylalanine. In terms of biological role, tyrosine carboxypeptidase that removes the C-terminal tyrosine residue of alpha-tubulin, thereby regulating microtubule dynamics and function. Also able to remove the C-terminal phenylalanine residue of alpha-tubulin TUBA8. Recognizes adjacent tubulin dimers along the same protofilament. This is Microtubule-associated tyrosine carboxypeptidase 1 from Homo sapiens (Human).